Here is a 269-residue protein sequence, read N- to C-terminus: Tryptophan synthase alpha chain (269 aa).

Active-site proton acceptor residues include E49 and D60.

Belongs to the TrpA family. In terms of assembly, tetramer of two alpha and two beta chains.

The catalysed reaction is (1S,2R)-1-C-(indol-3-yl)glycerol 3-phosphate + L-serine = D-glyceraldehyde 3-phosphate + L-tryptophan + H2O. It participates in amino-acid biosynthesis; L-tryptophan biosynthesis; L-tryptophan from chorismate: step 5/5. In terms of biological role, the alpha subunit is responsible for the aldol cleavage of indoleglycerol phosphate to indole and glyceraldehyde 3-phosphate. The sequence is that of Tryptophan synthase alpha chain from Pseudomonas fluorescens (strain SBW25).